The primary structure comprises 451 residues: 3-phosphoshikimate 1-carboxyvinyltransferase (451 aa).

Positions 30, 31, and 35 each coordinate 3-phosphoshikimate. K30 provides a ligand contact to phosphoenolpyruvate. Phosphoenolpyruvate contacts are provided by G103 and R131. The 3-phosphoshikimate site is built by S176, Q178, D329, and K356. Q178 provides a ligand contact to phosphoenolpyruvate. The Proton acceptor role is filled by D329. Phosphoenolpyruvate is bound by residues R360 and R404.

The protein belongs to the EPSP synthase family. Monomer.

It is found in the cytoplasm. It carries out the reaction 3-phosphoshikimate + phosphoenolpyruvate = 5-O-(1-carboxyvinyl)-3-phosphoshikimate + phosphate. It participates in metabolic intermediate biosynthesis; chorismate biosynthesis; chorismate from D-erythrose 4-phosphate and phosphoenolpyruvate: step 6/7. Its function is as follows. Catalyzes the transfer of the enolpyruvyl moiety of phosphoenolpyruvate (PEP) to the 5-hydroxyl of shikimate-3-phosphate (S3P) to produce enolpyruvyl shikimate-3-phosphate and inorganic phosphate. This Parvibaculum lavamentivorans (strain DS-1 / DSM 13023 / NCIMB 13966) protein is 3-phosphoshikimate 1-carboxyvinyltransferase.